Reading from the N-terminus, the 245-residue chain is Geranylgeranylglyceryl phosphate synthase (245 aa).

Mg(2+) is bound by residues Asp22 and Ser51. Residues 169–175 (YLEAGSG), 200–201 (GG), and 222–223 (GT) each bind sn-glycerol 1-phosphate.

Belongs to the GGGP/HepGP synthase family. Group II subfamily. Homotetramer. Homohexamer. Mg(2+) is required as a cofactor.

It localises to the cytoplasm. The catalysed reaction is sn-glycerol 1-phosphate + (2E,6E,10E)-geranylgeranyl diphosphate = sn-3-O-(geranylgeranyl)glycerol 1-phosphate + diphosphate. It functions in the pathway membrane lipid metabolism; glycerophospholipid metabolism. Its function is as follows. Prenyltransferase that catalyzes the transfer of the geranylgeranyl moiety of geranylgeranyl diphosphate (GGPP) to the C3 hydroxyl of sn-glycerol-1-phosphate (G1P). This reaction is the first ether-bond-formation step in the biosynthesis of archaeal membrane lipids. The polypeptide is Geranylgeranylglyceryl phosphate synthase (Methanothermobacter thermautotrophicus (strain ATCC 29096 / DSM 1053 / JCM 10044 / NBRC 100330 / Delta H) (Methanobacterium thermoautotrophicum)).